The primary structure comprises 1032 residues: Tail tape measure protein gp18 (1032 aa).

Positions 131 to 178 form a coiled coil; the sequence is GVIKASQDLDKLQAKLDDATDAKERAKIMEQIKNLQASLGKEERKALD.

It is found in the virion. Serves as a base for tail tube protein polymerization and acts as a template for tail length determination. The polypeptide is Tail tape measure protein gp18 (Bacillus phage SPP1 (Bacteriophage SPP1)).